The following is a 356-amino-acid chain: MKKKVLVGMSGGVDSSVAAYLLKEQGYEVIGVTMQIWQDDEEFIEKEGGCCSLSAVADARRVANKIGIPFYVMNFKDAFKRNVIDYFVDEYMEGRTPNPCIACNKFIKFSSFLDKAMAMGIDYVATGHYAIIEKHNDRYIIKKSEDDKKDQTYALYNLTQFQLERTLMPCGQYKKSKIREIAKEIGLRVHNKKDSEEICFIPDNDHGRYIKNRFPNKVREGNFVDKQGSILGTHKGIVYYTIGQRKGLGIAFGKPMYVVDINPFRNEVVLGDLEDLLNTELIAKDTNYIPFDTLKEPMEVEAKIRYSQTPSKAIITPIEDGRVRVNFHEKQRAITKGQSVVFYKDDLLIGGGIIEK.

ATP contacts are provided by residues 8–15 and M34; that span reads GMSGGVDS. The active-site Nucleophile is C103. Cysteines 103 and 199 form a disulfide. G127 is a binding site for ATP. Residues 149–151 form an interaction with tRNA region; sequence KDQ. C199 functions as the Cysteine persulfide intermediate in the catalytic mechanism. Residues 305–306 form an interaction with tRNA region; sequence RY.

It belongs to the MnmA/TRMU family.

It localises to the cytoplasm. It catalyses the reaction S-sulfanyl-L-cysteinyl-[protein] + uridine(34) in tRNA + AH2 + ATP = 2-thiouridine(34) in tRNA + L-cysteinyl-[protein] + A + AMP + diphosphate + H(+). Catalyzes the 2-thiolation of uridine at the wobble position (U34) of tRNA, leading to the formation of s(2)U34. This chain is tRNA-specific 2-thiouridylase MnmA 1, found in Clostridium botulinum (strain Langeland / NCTC 10281 / Type F).